Consider the following 639-residue polypeptide: Chaperone protein HtpG (639 aa).

Positions 1-347 (MSQQETHGFQ…SNDLPLNVSR (347 aa)) are a; substrate-binding. The segment at 348 to 564 (EILQDNKVTT…EGEMSTQMIK (217 aa)) is b. A c region spans residues 565–639 (LMQAAGQDVP…MNQMLLASVK (75 aa)).

The protein belongs to the heat shock protein 90 family. Homodimer.

It is found in the cytoplasm. Its function is as follows. Molecular chaperone. Has ATPase activity. This is Chaperone protein HtpG from Shewanella halifaxensis (strain HAW-EB4).